The following is a 199-amino-acid chain: Pyridoxine/pyridoxamine 5'-phosphate oxidase (199 aa).

FMN-binding positions include 44–49 (RTVLLK), 59–60 (YS), Lys66, and Gln91. Substrate is bound at residue Lys49. Positions 109, 113, and 117 each coordinate substrate. Residues 126 to 127 (QS) and Trp171 contribute to the FMN site. 177 to 179 (RLH) serves as a coordination point for substrate. Arg181 is a binding site for FMN.

It belongs to the pyridoxamine 5'-phosphate oxidase family. Homodimer. FMN is required as a cofactor.

The enzyme catalyses pyridoxamine 5'-phosphate + O2 + H2O = pyridoxal 5'-phosphate + H2O2 + NH4(+). It carries out the reaction pyridoxine 5'-phosphate + O2 = pyridoxal 5'-phosphate + H2O2. Its pathway is cofactor metabolism; pyridoxal 5'-phosphate salvage; pyridoxal 5'-phosphate from pyridoxamine 5'-phosphate: step 1/1. It functions in the pathway cofactor metabolism; pyridoxal 5'-phosphate salvage; pyridoxal 5'-phosphate from pyridoxine 5'-phosphate: step 1/1. Catalyzes the oxidation of either pyridoxine 5'-phosphate (PNP) or pyridoxamine 5'-phosphate (PMP) into pyridoxal 5'-phosphate (PLP). The protein is Pyridoxine/pyridoxamine 5'-phosphate oxidase of Xanthomonas oryzae pv. oryzae (strain KACC10331 / KXO85).